Consider the following 670-residue polypeptide: Protein HBS1 (670 aa).

Disordered stretches follow at residues 60–88 (KDIQEEEADEDEDEDAAFAKARRDSESFQ) and 164–202 (KTVSKTVPTPPPKISLKEPRRGFEIPSPKVPSSPVVSGR). Residues 63–75 (QEEEADEDEDEDA) are compositionally biased toward acidic residues. Residues 189 to 200 (PSPKVPSSPVVS) show a composition bias toward low complexity. Positions 245–468 (KSHIHMIVIG…DVIENFKIPE (224 aa)) constitute a tr-type G domain. Positions 254–261 (GHVDAGKS) are G1. 254 to 261 (GHVDAGKS) provides a ligand contact to GTP. The interval 310–314 (GITMD) is G2. The interval 331-334 (DAPG) is G3. GTP-binding positions include 393 to 396 (NKLD) and 432 to 434 (SGL). The tract at residues 393–396 (NKLD) is G4. A G5 region spans residues 432–434 (SGL).

It belongs to the TRAFAC class translation factor GTPase superfamily. Classic translation factor GTPase family. As to quaternary structure, component of the Pelota-HBS1L complex, also named Dom34-Hbs1 complex, composed of pelo and HBS1. In terms of tissue distribution, expressed in ovaries (at protein level).

It localises to the cytoplasm. It catalyses the reaction GTP + H2O = GDP + phosphate + H(+). GTPase component of the Pelota-HBS1L complex, a complex that recognizes stalled ribosomes and triggers the No-Go Decay (NGD) pathway. The Pelota-HBS1L complex recognizes ribosomes stalled at the 3' end of an mRNA and engages stalled ribosomes by destabilizing mRNA in the mRNA channel. Following ribosome-binding, the Pelota-HBS1L complex promotes recruitment of pix, which drives the disassembly of stalled ribosomes, followed by degradation of damaged mRNAs as part of the NGD pathway. Together with pelo, required for transposon silencing in the ovary and testis. Together with pelo, promotes meiosis and spermatid individualization during spermatogenesis. This is Protein HBS1 from Drosophila melanogaster (Fruit fly).